Here is a 402-residue protein sequence, read N- to C-terminus: Nicotinate phosphoribosyltransferase (402 aa).

H224 is subject to Phosphohistidine; by autocatalysis.

It belongs to the NAPRTase family. Post-translationally, transiently phosphorylated on a His residue during the reaction cycle. Phosphorylation strongly increases the affinity for substrates and increases the rate of nicotinate D-ribonucleotide production. Dephosphorylation regenerates the low-affinity form of the enzyme, leading to product release.

It catalyses the reaction nicotinate + 5-phospho-alpha-D-ribose 1-diphosphate + ATP + H2O = nicotinate beta-D-ribonucleotide + ADP + phosphate + diphosphate. The protein operates within cofactor biosynthesis; NAD(+) biosynthesis; nicotinate D-ribonucleotide from nicotinate: step 1/1. In terms of biological role, catalyzes the synthesis of beta-nicotinate D-ribonucleotide from nicotinate and 5-phospho-D-ribose 1-phosphate at the expense of ATP. This Neisseria meningitidis serogroup B (strain ATCC BAA-335 / MC58) protein is Nicotinate phosphoribosyltransferase.